We begin with the raw amino-acid sequence, 347 residues long: GMP reductase (347 aa).

Residue 108–131 (ADFEKTKQILDLNPALNFVCIDVA) coordinates NADP(+). 2 residues coordinate K(+): Gly-181 and Gly-183. The active-site Thioimidate intermediate is Cys-186. 216–239 (IISDGGCTTPGDVAKAFGGGADFV) contributes to the NADP(+) binding site.

It belongs to the IMPDH/GMPR family. GuaC type 1 subfamily. As to quaternary structure, homotetramer.

The enzyme catalyses IMP + NH4(+) + NADP(+) = GMP + NADPH + 2 H(+). In terms of biological role, catalyzes the irreversible NADPH-dependent deamination of GMP to IMP. It functions in the conversion of nucleobase, nucleoside and nucleotide derivatives of G to A nucleotides, and in maintaining the intracellular balance of A and G nucleotides. This is GMP reductase from Escherichia coli O157:H7.